We begin with the raw amino-acid sequence, 328 residues long: Ketol-acid reductoisomerase (NADP(+)) (328 aa).

The KARI N-terminal Rossmann domain occupies 2–182; that stretch reads AKIYRDVDAS…GATRAGVIET (181 aa). NADP(+) is bound by residues 25–28, Arg-48, Ser-53, and 83–86; these read YGIQ and DMEQ. His-108 is an active-site residue. Residue Gly-134 participates in NADP(+) binding. A KARI C-terminal knotted domain is found at 183 to 328; sequence TFAEETETDL…IEMRRLLFGQ (146 aa). 4 residues coordinate Mg(2+): Asp-191, Glu-195, Glu-227, and Glu-231. Ser-252 provides a ligand contact to substrate.

The protein belongs to the ketol-acid reductoisomerase family. The cofactor is Mg(2+).

It catalyses the reaction (2R)-2,3-dihydroxy-3-methylbutanoate + NADP(+) = (2S)-2-acetolactate + NADPH + H(+). The enzyme catalyses (2R,3R)-2,3-dihydroxy-3-methylpentanoate + NADP(+) = (S)-2-ethyl-2-hydroxy-3-oxobutanoate + NADPH + H(+). The protein operates within amino-acid biosynthesis; L-isoleucine biosynthesis; L-isoleucine from 2-oxobutanoate: step 2/4. It participates in amino-acid biosynthesis; L-valine biosynthesis; L-valine from pyruvate: step 2/4. In terms of biological role, involved in the biosynthesis of branched-chain amino acids (BCAA). Catalyzes an alkyl-migration followed by a ketol-acid reduction of (S)-2-acetolactate (S2AL) to yield (R)-2,3-dihydroxy-isovalerate. In the isomerase reaction, S2AL is rearranged via a Mg-dependent methyl migration to produce 3-hydroxy-3-methyl-2-ketobutyrate (HMKB). In the reductase reaction, this 2-ketoacid undergoes a metal-dependent reduction by NADPH to yield (R)-2,3-dihydroxy-isovalerate. This Pyrobaculum arsenaticum (strain DSM 13514 / JCM 11321 / PZ6) protein is Ketol-acid reductoisomerase (NADP(+)).